The chain runs to 453 residues: Bifunctional protein GlmU (453 aa).

The segment at 1–226 is pyrophosphorylase; it reads MKFSTVILAA…SIEVEGVNDR (226 aa). UDP-N-acetyl-alpha-D-glucosamine is bound by residues 8–11, lysine 22, glutamine 73, 78–79, 100–102, glycine 137, glutamate 151, asparagine 166, and asparagine 224; these read LAAG, GT, and YGD. Aspartate 102 provides a ligand contact to Mg(2+). Asparagine 224 contacts Mg(2+). The interval 227-247 is linker; it reads IQLARLERAFQARQAKKLLEQ. The N-acetyltransferase stretch occupies residues 248–453; that stretch reads GVMLRDPARF…AGWQRPAKKK (206 aa). The UDP-N-acetyl-alpha-D-glucosamine site is built by arginine 330 and lysine 348. Histidine 360 functions as the Proton acceptor in the catalytic mechanism. The UDP-N-acetyl-alpha-D-glucosamine site is built by tyrosine 363 and asparagine 374. Acetyl-CoA-binding positions include alanine 377, 383–384, serine 402, alanine 420, and arginine 437; that span reads NY.

This sequence in the N-terminal section; belongs to the N-acetylglucosamine-1-phosphate uridyltransferase family. It in the C-terminal section; belongs to the transferase hexapeptide repeat family. In terms of assembly, homotrimer. Mg(2+) serves as cofactor.

It localises to the cytoplasm. It catalyses the reaction alpha-D-glucosamine 1-phosphate + acetyl-CoA = N-acetyl-alpha-D-glucosamine 1-phosphate + CoA + H(+). It carries out the reaction N-acetyl-alpha-D-glucosamine 1-phosphate + UTP + H(+) = UDP-N-acetyl-alpha-D-glucosamine + diphosphate. Its pathway is nucleotide-sugar biosynthesis; UDP-N-acetyl-alpha-D-glucosamine biosynthesis; N-acetyl-alpha-D-glucosamine 1-phosphate from alpha-D-glucosamine 6-phosphate (route II): step 2/2. It functions in the pathway nucleotide-sugar biosynthesis; UDP-N-acetyl-alpha-D-glucosamine biosynthesis; UDP-N-acetyl-alpha-D-glucosamine from N-acetyl-alpha-D-glucosamine 1-phosphate: step 1/1. It participates in bacterial outer membrane biogenesis; LPS lipid A biosynthesis. Functionally, catalyzes the last two sequential reactions in the de novo biosynthetic pathway for UDP-N-acetylglucosamine (UDP-GlcNAc). The C-terminal domain catalyzes the transfer of acetyl group from acetyl coenzyme A to glucosamine-1-phosphate (GlcN-1-P) to produce N-acetylglucosamine-1-phosphate (GlcNAc-1-P), which is converted into UDP-GlcNAc by the transfer of uridine 5-monophosphate (from uridine 5-triphosphate), a reaction catalyzed by the N-terminal domain. The protein is Bifunctional protein GlmU of Vibrio cholerae serotype O1 (strain M66-2).